Consider the following 148-residue polypeptide: uncharacterized protein (148 aa).

A disordered region spans residues 1 to 108; that stretch reads MGRAGPRSTA…PSRLRGKRSL (108 aa). Basic residues predominate over residues 22-42; it reads RRPRPWQKPTSPRRLHRRRPR. Over residues 88-97 the composition is skewed to polar residues; it reads DTSASNPSQR.

This is an uncharacterized protein from Homo sapiens (Human).